The sequence spans 494 residues: Glycosyl hydrolase family 109 protein (494 aa).

Positions 1–32 (MNDDARPAPEPQDIPPHSGAADEVNRQDPSRR) are disordered. A signal peptide (tat-type signal) is located at residues 1 to 58 (MNDDARPAPEPQDIPPHSGAADEVNRQDPSRRSVLWTTAGVAGAGLGLGALGAGTASA). Residues 104–105 (NR), D126, 175–178 (WELH), 195–196 (EC), and N224 each bind NAD(+). Substrate is bound by residues Y253, R272, 284 to 287 (YPNH), and Y366. NAD(+) is bound at residue Y284.

This sequence belongs to the Gfo/Idh/MocA family. Glycosyl hydrolase 109 subfamily. The cofactor is NAD(+). Predicted to be exported by the Tat system. The position of the signal peptide cleavage has not been experimentally proven.

Functionally, glycosidase. In Streptomyces filamentosus (Streptomyces roseosporus), this protein is Glycosyl hydrolase family 109 protein.